We begin with the raw amino-acid sequence, 216 residues long: Peptide deformylase 1 (216 aa).

Positions 135 and 177 each coordinate Fe cation. Residue Glu-178 is part of the active site. His-181 is a binding site for Fe cation.

It belongs to the polypeptide deformylase family. Fe(2+) serves as cofactor.

It carries out the reaction N-terminal N-formyl-L-methionyl-[peptide] + H2O = N-terminal L-methionyl-[peptide] + formate. Its function is as follows. Removes the formyl group from the N-terminal Met of newly synthesized proteins. Requires at least a dipeptide for an efficient rate of reaction. N-terminal L-methionine is a prerequisite for activity but the enzyme has broad specificity at other positions. The polypeptide is Peptide deformylase 1 (Streptomyces avermitilis (strain ATCC 31267 / DSM 46492 / JCM 5070 / NBRC 14893 / NCIMB 12804 / NRRL 8165 / MA-4680)).